Here is a 57-residue protein sequence, read N- to C-terminus: Putative secreted protein MT0250 (57 aa).

The N-terminal stretch at 1-32 is a signal peptide; the sequence is MNRIVAPAAASVVVGLLLGAAAIFGVTLMVQQ. Residues 34 to 57 form a disordered region; the sequence is KKPPLPGGDPSSSVLNRVEYGNRS.

This Mycobacterium tuberculosis (strain CDC 1551 / Oshkosh) protein is Putative secreted protein MT0250.